The following is a 318-amino-acid chain: DNA repair nuclease/redox regulator APEX1 (318 aa).

Residues 1 to 33 (MPKRGKKGAVAEDGDELKTEPEAKKSKTAAKKN) are necessary for interaction with YBX1, binding to RNA, association together with NPM1 to rRNA, endoribonuclease activity on abasic RNA and localization in the nucleoli. A disordered region spans residues 1–60 (MPKRGKKGAVAEDGDELKTEPEAKKSKTAAKKNDKEAAGEGPALYEDPPDQKTSPSGKPA). N6-acetyllysine; by EP300 occurs at positions 6 and 7. The Nuclear localization signal (NLS) motif lies at 8-13 (GAVAED). Positions 16–38 (ELKTEPEAKKSKTAAKKNDKEAA) are enriched in basic and acidic residues. Positions 23-33 (AKKSKTAAKKN) are necessary for interaction with NPM1 and for efficient rRNA binding. Lysine 27, lysine 31, lysine 32, and lysine 35 each carry N6-acetyllysine. Residue serine 54 is modified to Phosphoserine. Residues 64-80 (ICSWNVDGLRAWIKKKG) carry the Nuclear export signal (NES) motif. Cysteine 65 is modified (S-nitrosocysteine; alternate). A disulfide bond links cysteine 65 and cysteine 93. A Mg(2+)-binding site is contributed by aspartate 70. Position 93 is an S-nitrosocysteine; alternate (cysteine 93). Residue glutamate 96 participates in Mg(2+) binding. Tyrosine 171 is a catalytic residue. Position 197 is an N6-acetyllysine (lysine 197). The Mg(2+) site is built by aspartate 210 and asparagine 212. Aspartate 210 serves as the catalytic Proton donor/acceptor. A Phosphothreonine; by CDK5 modification is found at threonine 233. The mitochondrial targeting sequence (MTS) stretch occupies residues 289–318 (HSLLPALCDSKIRSKALGSDHCPITLYLAL). Position 308 (aspartate 308) interacts with Mg(2+). Cysteine 310 is subject to S-nitrosocysteine.

Belongs to the DNA repair enzymes AP/ExoA family. Monomer. Homodimer; disulfide-linked. Component of the SET complex, composed of at least APEX1, SET, ANP32A, HMGB2, NME1 and TREX1. Associates with the dimer XRCC5/XRCC6 in a DNA-dependent manner. Interacts with SIRT1; the interaction is increased in the context of genotoxic stress. Interacts with HDAC1, HDAC2 and HDAC3; the interactions are not dependent on the APEX1 acetylation status. Interacts with XRCC1; the interaction is induced by SIRT1 and increased with the APEX1 acetylated form. Interacts with NPM1 (via N-terminal domain); the interaction is RNA-dependent and decreases in hydrogen peroxide-damaged cells. Interacts (via N-terminus) with YBX1 (via C-terminus); the interaction is increased in presence of APEX1 acetylated at Lys-6 and Lys-7. Interacts with HNRNPL; the interaction is DNA-dependent. Interacts (via N-terminus) with KPNA1 and KPNA2. Interacts with TXN; the interaction stimulates the FOS/JUN AP-1 complex DNA-binding activity in a redox-dependent manner. Interacts with GZMA, KRT8, MDM2, POLB, PRDX6, PRPF19, RPLP0, TOMM20 and WDR77. Binds to CDK5. Mg(2+) serves as cofactor. Mn(2+) is required as a cofactor. In terms of processing, phosphorylated. Phosphorylation by kinase PKC or casein kinase CK2 results in enhanced redox activity that stimulates binding of the FOS/JUN AP-1 complex to its cognate binding site. AP-endodeoxyribonuclease activity is not affected by CK2-mediated phosphorylation. Phosphorylation of Thr-233 by CDK5 in response to MPP(+)/MPTP (1-methyl-4-phenylpyridinium) reduces AP-endodeoxyribonuclease activity resulting in accumulation of DNA damage and contributing to neuronal death. Acetylated on Lys-6 and Lys-7. Acetylation is increased by the transcriptional coactivator EP300 acetyltransferase, genotoxic agents like H(2)O(2) and methyl methanesulfonate (MMS). Acetylation increases its binding affinity to the negative calcium response element (nCaRE) DNA promoter. The acetylated form induces a stronger binding of YBX1 to the Y-box sequence in the MDR1 promoter than the unacetylated form. Deacetylated on lysines. Lys-6 and Lys-7 are deacetylated by SIRT1. Post-translationally, cleaved at Lys-31 by granzyme A to create the mitochondrial form; leading in reduction of binding to DNA, AP endodeoxyribonuclease activity, redox activation of transcription factors and to enhanced cell death. Cleaved by granzyme K; leading to intracellular ROS accumulation and enhanced cell death after oxidative stress. In terms of processing, cys-69 and Cys-93 are nitrosylated in response to nitric oxide (NO) and lead to the exposure of the nuclear export signal (NES). Ubiquitinated by MDM2; leading to translocation to the cytoplasm and proteasomal degradation.

The protein localises to the nucleus. Its subcellular location is the nucleolus. It localises to the nucleus speckle. It is found in the endoplasmic reticulum. The protein resides in the cytoplasm. The protein localises to the mitochondrion. The catalysed reaction is Exonucleolytic cleavage in the 3'- to 5'-direction to yield nucleoside 5'-phosphates.. NPM1 stimulates endodeoxyribonuclease activity on double-stranded DNA with AP sites, but inhibits endoribonuclease activity on single-stranded RNA containing AP sites. Multifunctional protein that plays a central role in the cellular response to oxidative stress. The two major activities of APEX1 are DNA repair and redox regulation of transcriptional factors. Functions as an apurinic/apyrimidinic (AP) endodeoxyribonuclease in the DNA base excision repair (BER) pathway of DNA lesions induced by oxidative and alkylating agents. Initiates repair of AP sites in DNA by catalyzing hydrolytic incision of the phosphodiester backbone immediately adjacent to the damage, generating a single-strand break with 5'-deoxyribose phosphate and 3'-hydroxyl ends. Also incises at AP sites in the DNA strand of DNA/RNA hybrids, single-stranded DNA regions of R-loop structures, and single-stranded RNA molecules. Has 3'-5' exoribonuclease activity on mismatched deoxyribonucleotides at the 3' termini of nicked or gapped DNA molecules during short-patch BER. Possesses DNA 3' phosphodiesterase activity capable of removing lesions (such as phosphoglycolate) blocking the 3' side of DNA strand breaks. May also play a role in the epigenetic regulation of gene expression by participating in DNA demethylation. Acts as a loading factor for POLB onto non-incised AP sites in DNA and stimulates the 5'-terminal deoxyribose 5'-phosphate (dRp) excision activity of POLB. Plays a role in the protection from granzyme-mediated cellular repair leading to cell death. Also involved in the DNA cleavage step of class switch recombination (CSR). On the other hand, APEX1 also exerts reversible nuclear redox activity to regulate DNA binding affinity and transcriptional activity of transcriptional factors by controlling the redox status of their DNA-binding domain, such as the FOS/JUN AP-1 complex after exposure to IR. Involved in calcium-dependent down-regulation of parathyroid hormone (PTH) expression by binding to negative calcium response elements (nCaREs). Together with HNRNPL or the dimer XRCC5/XRCC6, associates with nCaRE, acting as an activator of transcriptional repression. Stimulates the YBX1-mediated MDR1 promoter activity, when acetylated at Lys-6 and Lys-7, leading to drug resistance. Also acts as an endoribonuclease involved in the control of single-stranded RNA metabolism. Plays a role in regulating MYC mRNA turnover by preferentially cleaving in between UA and CA dinucleotides of the MYC coding region determinant (CRD). In association with NMD1, plays a role in the rRNA quality control process during cell cycle progression. Associates, together with YBX1, on the MDR1 promoter. Together with NPM1, associates with rRNA. Binds DNA and RNA. The sequence is that of DNA repair nuclease/redox regulator APEX1 (APEX1) from Gorilla gorilla gorilla (Western lowland gorilla).